The sequence spans 254 residues: Glucosamine-6-phosphate deaminase (254 aa).

Asp65 (proton acceptor; for enolization step) is an active-site residue. Asn134 (for ring-opening step) is an active-site residue. His136 serves as the catalytic Proton acceptor; for ring-opening step. Glu141 (for ring-opening step) is an active-site residue.

Belongs to the glucosamine/galactosamine-6-phosphate isomerase family. NagB subfamily.

The enzyme catalyses alpha-D-glucosamine 6-phosphate + H2O = beta-D-fructose 6-phosphate + NH4(+). Its pathway is amino-sugar metabolism; N-acetylneuraminate degradation; D-fructose 6-phosphate from N-acetylneuraminate: step 5/5. Catalyzes the reversible isomerization-deamination of glucosamine 6-phosphate (GlcN6P) to form fructose 6-phosphate (Fru6P) and ammonium ion. The polypeptide is Glucosamine-6-phosphate deaminase (Corynebacterium aurimucosum (strain ATCC 700975 / DSM 44827 / CIP 107346 / CN-1) (Corynebacterium nigricans)).